Here is a 348-residue protein sequence, read N- to C-terminus: High mobility group protein 20A (348 aa).

Disordered regions lie at residues 1 to 114 (MENL…YVRF) and 181 to 213 (SRKA…DTKE). Polar residues-rich tracts occupy residues 34–47 (SESS…QPVN) and 56–71 (SQVQ…TAEN). Over residues 72-82 (TEQKPEEEQQR) the composition is skewed to basic and acidic residues. The span at 83 to 97 (TKRGGWAKGRKRKKP) shows a compositional bias: basic residues. The segment at residues 104–172 (PKSPLTGYVR…RYMRELEQYQ (69 aa)) is a DNA-binding region (HMG box). A compositionally biased stretch (basic and acidic residues) spans 183–213 (KAQDRQKGKLHRQDGARQPVHDHEKEADTKE). Residues 230–274 (SKAREAELRQLRKSNMEFEERNAALQKHVESMRTAVEKLEVDVIQ) adopt a coiled-coil conformation.

It is found in the nucleus. Functionally, plays a role in neuronal differentiation. This is High mobility group protein 20A (HMG20A) from Gallus gallus (Chicken).